The sequence spans 344 residues: F17a-G fimbrial adhesin (344 aa).

Residues 1–22 (MTNFYKVFLAVFILVCCNISQA) form the signal peptide. The interval 23-199 (AVSFIGSTEN…SLNPFTLNDT (177 aa)) is receptor-binding lectin domain. A carbohydrate is bound by residues 65 to 66 (AN), 110 to 111 (DT), and 139 to 142 (STQG). Cys75 and Cys132 form a disulfide bridge. The fimbrillin-binding domain stretch occupies residues 200–344 (VTSCRLLTPS…GISTFTFSYQ (145 aa)). The interval 288-308 (LKFGPDSPVKGNENQWQLSTG) is disordered. Residues 299-308 (NENQWQLSTG) are compositionally biased toward polar residues.

The protein belongs to the fimbrial protein family.

Its subcellular location is the fimbrium. Essential fimbrial adhesion factor that mediates binding to N-acetylglucosamine-containing receptors in the host intestinal microvilli, leading to colonization of the intestinal tissue, and diarrhea or septicemia. Also confers adhesiveness to laminin and basement membranes. This Escherichia coli protein is F17a-G fimbrial adhesin (f17aG).